Reading from the N-terminus, the 456-residue chain is Riboflavin transporter RibZ (456 aa).

14 helical membrane-spanning segments follow: residues 5–25, 45–65, 78–98, 105–125, 134–154, 158–178, 192–212, 220–240, 260–280, 289–309, 321–341, 343–363, 385–405, and 428–448; these read WIVL…GSIL, WVVT…GKLG, FFIF…STLI, AVGA…AFPA, ITGA…GIIL, GWPS…FLGI, SFDI…LLAM, LYLG…EVKF, IIGV…PFYL, MMAG…APIA, ILTA…LLKA, SPLY…GAFS, FLAT…SSFF, and QSYW…VFFM.

This sequence belongs to the major facilitator superfamily.

The protein localises to the cell membrane. Functionally, transports riboflavin into the cell. This Clostridioides difficile (strain 630) (Peptoclostridium difficile) protein is Riboflavin transporter RibZ.